A 247-amino-acid polypeptide reads, in one-letter code: Protein AC124 (247 aa).

It localises to the host cytoplasm. The protein localises to the host nucleus. Functionally, accelerates mortality in insect larvae. In Lepidoptera (butterflies and moths), this protein is Protein AC124.